The chain runs to 452 residues: MQRRIFGIETEFGVTCTFHGQRRLSPDEVARYLFRRVVSWGRSSNVFLSNGSRLYLDVGSHPEYATAECDDLAQLVTHDKAGERILEDLLIDAERRLAEEGIGGDIFLFKNNTDSAGNSYGCHENYLVTRAGEFSRVADVLLPFLVTRQLVCGAGKVLQTPRGGVYCLSQRAEHIWEGVSSATTRSRPIINTRDEPHADAERYRRLHVIVGDSNMAEPTTLLKVGSVHLVLQMIEEGVQFRDFTLDNPIRAIREISHDLTGRRQVRLAGGREASALEIQREYYARAVQHVESGDPSPTTQYLIDLWGRALDAVEQQDFSSIDTEIDWAIKHRLVERYRSKHNLTLSDPRVAQLDLAYHDIRRGRGVFDLLQRKGMVRRITDDGEIELAKDSPPQTTRAKLRGDFIAAAQEAGRDFTVDWVHLKLNDQAQRTVLCKDPFRSVDERVERLINSL.

Glu9 is a Mg(2+) binding site. Residue Arg53 coordinates ATP. Tyr55 is a binding site for Mg(2+). Asp57 (proton acceptor) is an active-site residue. Glu63 serves as a coordination point for Mg(2+). The ATP site is built by Thr66 and Trp419.

It belongs to the Pup ligase/Pup deamidase family. Pup-conjugating enzyme subfamily.

It carries out the reaction ATP + [prokaryotic ubiquitin-like protein]-L-glutamate + [protein]-L-lysine = ADP + phosphate + N(6)-([prokaryotic ubiquitin-like protein]-gamma-L-glutamyl)-[protein]-L-lysine.. The protein operates within protein degradation; proteasomal Pup-dependent pathway. It participates in protein modification; protein pupylation. In terms of biological role, catalyzes the covalent attachment of the prokaryotic ubiquitin-like protein modifier Pup to the proteasomal substrate proteins, thereby targeting them for proteasomal degradation. This tagging system is termed pupylation. The ligation reaction involves the side-chain carboxylate of the C-terminal glutamate of Pup and the side-chain amino group of a substrate lysine. The polypeptide is Pup--protein ligase (Saccharomonospora viridis (strain ATCC 15386 / DSM 43017 / JCM 3036 / CCUG 5913 / NBRC 12207 / NCIMB 9602 / P101) (Thermoactinomyces viridis)).